A 917-amino-acid chain; its full sequence is Isoleucine--tRNA ligase (917 aa).

Residues 57 to 67 (PYANGNLHMGH) carry the 'HIGH' region motif. Residue E554 coordinates L-isoleucyl-5'-AMP. Positions 595–599 (KMSKS) match the 'KMSKS' region motif. ATP is bound at residue K598. C886, C889, C906, and C909 together coordinate Zn(2+).

Belongs to the class-I aminoacyl-tRNA synthetase family. IleS type 1 subfamily. As to quaternary structure, monomer. Zn(2+) is required as a cofactor.

The protein resides in the cytoplasm. The enzyme catalyses tRNA(Ile) + L-isoleucine + ATP = L-isoleucyl-tRNA(Ile) + AMP + diphosphate. Functionally, catalyzes the attachment of isoleucine to tRNA(Ile). As IleRS can inadvertently accommodate and process structurally similar amino acids such as valine, to avoid such errors it has two additional distinct tRNA(Ile)-dependent editing activities. One activity is designated as 'pretransfer' editing and involves the hydrolysis of activated Val-AMP. The other activity is designated 'posttransfer' editing and involves deacylation of mischarged Val-tRNA(Ile). This chain is Isoleucine--tRNA ligase (ileS), found in Staphylococcus aureus (strain MSSA476).